Here is a 360-residue protein sequence, read N- to C-terminus: Flavone O-methyltransferase 1 (360 aa).

Met127–Leu133 contacts substrate. The tract at residues Ala159–Met177 is substrate binding. The S-adenosyl-L-methionine site is built by Gly205, Asp228, Asp248, Met249, and Lys262. His266 serves as the catalytic Proton acceptor.

Belongs to the class I-like SAM-binding methyltransferase superfamily. Cation-independent O-methyltransferase family. COMT subfamily. Homodimer.

Functionally, flavone-specific O-methyltransferase with a preference for flavones &gt; flavonols. Active with tricetin, luteolin, quercitin and eriodictyol. Very low activity with phenylpropanoids (5-hydroxyferulic acid and caffeic acid). Catalyzes the sequential O-methylation of tricetin via 3'-O-methyltricetin, 3',5'-O-methyltricetin to 3',4',5'-O-trimethyltricetin. The protein is Flavone O-methyltransferase 1 (OMT1) of Triticum aestivum (Wheat).